A 189-amino-acid chain; its full sequence is Transcription factor FapR (189 aa).

This sequence belongs to the FapR family.

Transcriptional factor involved in regulation of membrane lipid biosynthesis by repressing genes involved in fatty acid and phospholipid metabolism. This chain is Transcription factor FapR, found in Listeria monocytogenes serotype 4b (strain CLIP80459).